A 364-amino-acid chain; its full sequence is Lipid-A-disaccharide synthase (364 aa).

It belongs to the LpxB family.

It carries out the reaction a lipid X + a UDP-2-N,3-O-bis[(3R)-3-hydroxyacyl]-alpha-D-glucosamine = a lipid A disaccharide + UDP + H(+). It functions in the pathway bacterial outer membrane biogenesis; LPS lipid A biosynthesis. Functionally, condensation of UDP-2,3-diacylglucosamine and 2,3-diacylglucosamine-1-phosphate to form lipid A disaccharide, a precursor of lipid A, a phosphorylated glycolipid that anchors the lipopolysaccharide to the outer membrane of the cell. This is Lipid-A-disaccharide synthase from Campylobacter jejuni (strain RM1221).